The sequence spans 228 residues: Chaperone protein FanE (228 aa).

The first 19 residues, 1-19 (MNKFISIIALCVFSSYANA), serve as a signal peptide directing secretion. Residues cysteine 157 and cysteine 198 are joined by a disulfide bond.

Belongs to the periplasmic pilus chaperone family.

The protein localises to the periplasm. In terms of biological role, mediates assembly of pili by forming soluble multimeric complexes with pili subunits as an intermediate step in the assembly process. This protein is involved in K99 pili assembly. The chain is Chaperone protein FanE (fanE) from Escherichia coli.